Here is a 285-residue protein sequence, read N- to C-terminus: Inositol polyphosphate 1-phosphatase (285 aa).

Mg(2+) contacts are provided by glutamate 68, aspartate 106, leucine 108, and aspartate 109. 1D-myo-inositol 1,4-bisphosphate-binding residues include aspartate 109, glycine 110, threonine 111, serine 173, glycine 195, serine 197, and lysine 200. Residue aspartate 223 coordinates Mg(2+).

The protein belongs to the inositol monophosphatase superfamily. As to quaternary structure, monomer. The cofactor is Mg(2+).

It is found in the cytoplasm. It catalyses the reaction 1D-myo-inositol 1,4-bisphosphate + H2O = 1D-myo-inositol 4-phosphate + phosphate. It carries out the reaction adenosine 3',5'-bisphosphate + H2O = AMP + phosphate. With respect to regulation, partially inhibited by Li(2+). Its function is as follows. Catalyzes the hydrolysis of the 1-position phosphate from inositol 1,4-bisphosphate. Is also able to convert 3'(2')-phosphoadenosine 5'-phosphate (PAP) to AMP but with less efficiency. This chain is Inositol polyphosphate 1-phosphatase, found in Entamoeba histolytica (strain ATCC 30459 / HM-1:IMSS / ABRM).